The sequence spans 145 residues: Large ribosomal subunit protein uL16 (145 aa).

The segment covering 1 to 17 (MLMPKRVKHRKVQRGRM) has biased composition (basic residues). Positions 1 to 20 (MLMPKRVKHRKVQRGRMKGV) are disordered.

This sequence belongs to the universal ribosomal protein uL16 family. In terms of assembly, part of the 50S ribosomal subunit.

In terms of biological role, binds 23S rRNA and is also seen to make contacts with the A and possibly P site tRNAs. This chain is Large ribosomal subunit protein uL16, found in Acetivibrio thermocellus (strain ATCC 27405 / DSM 1237 / JCM 9322 / NBRC 103400 / NCIMB 10682 / NRRL B-4536 / VPI 7372) (Clostridium thermocellum).